A 224-amino-acid polypeptide reads, in one-letter code: uncharacterized protein (224 aa).

Asp52 is a catalytic residue.

This sequence belongs to the pseudouridine synthase RluA family.

The enzyme catalyses a uridine in RNA = a pseudouridine in RNA. This is an uncharacterized protein from Haemophilus influenzae (strain ATCC 51907 / DSM 11121 / KW20 / Rd).